Consider the following 320-residue polypeptide: Citrate synthase (320 aa).

Residues His249 and Asp307 contribute to the active site.

It belongs to the citrate synthase family.

The catalysed reaction is oxaloacetate + acetyl-CoA + H2O = citrate + CoA + H(+). Its pathway is carbohydrate metabolism; tricarboxylic acid cycle; isocitrate from oxaloacetate: step 1/2. This is Citrate synthase (gltA) from Bartonella doshiae.